The primary structure comprises 297 residues: tRNA pseudouridine synthase B (297 aa).

The active-site Nucleophile is the aspartate 44.

It belongs to the pseudouridine synthase TruB family. Type 1 subfamily.

The catalysed reaction is uridine(55) in tRNA = pseudouridine(55) in tRNA. Responsible for synthesis of pseudouridine from uracil-55 in the psi GC loop of transfer RNAs. This chain is tRNA pseudouridine synthase B, found in Corynebacterium glutamicum (strain R).